The following is a 128-amino-acid chain: Small ribosomal subunit protein uS11 (128 aa).

It belongs to the universal ribosomal protein uS11 family. In terms of assembly, part of the 30S ribosomal subunit. Interacts with proteins S7 and S18. Binds to IF-3.

In terms of biological role, located on the platform of the 30S subunit, it bridges several disparate RNA helices of the 16S rRNA. Forms part of the Shine-Dalgarno cleft in the 70S ribosome. This is Small ribosomal subunit protein uS11 from Acinetobacter baylyi (strain ATCC 33305 / BD413 / ADP1).